The sequence spans 427 residues: Transcription termination factor Rho (427 aa).

Positions 51-125 (LLFMEGVLEI…LHVEAVNGDD (75 aa)) constitute a Rho RNA-BD domain. Residues 168–173 (GFGQRG), 180–185 (KAGKTM), and R211 contribute to the ATP site.

This sequence belongs to the Rho family. Homohexamer. The homohexamer assembles into an open ring structure.

Its function is as follows. Facilitates transcription termination by a mechanism that involves Rho binding to the nascent RNA, activation of Rho's RNA-dependent ATPase activity, and release of the mRNA from the DNA template. The chain is Transcription termination factor Rho from Bacillus subtilis (strain 168).